The chain runs to 334 residues: Glyceraldehyde-3-phosphate dehydrogenase B (334 aa).

Residues 12–13 (RI), Asp-34, and Ser-121 each bind NAD(+). Residues 149 to 151 (SCT), Thr-180, 209 to 210 (TG), and Arg-232 contribute to the D-glyceraldehyde 3-phosphate site. Cys-150 serves as the catalytic Nucleophile. Residue Asn-314 participates in NAD(+) binding.

It belongs to the glyceraldehyde-3-phosphate dehydrogenase family. In terms of assembly, homotetramer.

The enzyme catalyses D-glyceraldehyde 3-phosphate + phosphate + NAD(+) = (2R)-3-phospho-glyceroyl phosphate + NADH + H(+). Its pathway is carbohydrate degradation; glycolysis; pyruvate from D-glyceraldehyde 3-phosphate: step 1/5. Functionally, glyceraldehyde-3-phosphate dehydrogenase; part of the gene cluster that mediates the biosynthesis of heptelidic acid (HA), a sesquiterpene lactone that acts as an inhibitor of glyceraldehyde-3-phosphatedehydrogenase (GAPDH) and a growth inhibitor of the salt-tolerant lactic acid bacteria in soy sauce brewing. The GAPDPH hepG/gdpB shows much higher resistance to HA than the GAPDH gpdA located outside of the cluster, but it does not seem to act in self-resistance. This is Glyceraldehyde-3-phosphate dehydrogenase B from Aspergillus oryzae (strain ATCC 42149 / RIB 40) (Yellow koji mold).